A 163-amino-acid chain; its full sequence is MKAKGSVFRYGDNVDTDVIIPARFLNTSDPLELAAHCMEDIDADFSSKVNAGDIIVADDNFGCGSSREHAPISIKASGVSCVIANSFARIFYRNAINIGLPILECPEAVAVIEAGDEVEVDFDSGVITDVTKGQSFQGQAFPEFMQTLIAAGGLVNYINATEK.

Belongs to the LeuD family. LeuD type 2 subfamily. Heterodimer of a large and a small subunit.

It catalyses the reaction (2R,3S)-2,3-dimethylmalate = dimethylmaleate + H2O. It participates in cofactor degradation; nicotinate degradation; propanoate and pyruvate from 6-hydroxynicotinate: step 7/8. In Eubacterium barkeri (Clostridium barkeri), this protein is 2,3-dimethylmalate dehydratase small subunit.